The primary structure comprises 443 residues: 3-isopropylmalate dehydratase large subunit (443 aa).

[4Fe-4S] cluster is bound by residues Cys-347, Cys-407, and Cys-410.

The protein belongs to the aconitase/IPM isomerase family. LeuC type 1 subfamily. Heterodimer of LeuC and LeuD. Requires [4Fe-4S] cluster as cofactor.

The catalysed reaction is (2R,3S)-3-isopropylmalate = (2S)-2-isopropylmalate. It participates in amino-acid biosynthesis; L-leucine biosynthesis; L-leucine from 3-methyl-2-oxobutanoate: step 2/4. Its function is as follows. Catalyzes the isomerization between 2-isopropylmalate and 3-isopropylmalate, via the formation of 2-isopropylmaleate. The protein is 3-isopropylmalate dehydratase large subunit of Buchnera aphidicola subsp. Uroleucon sonchi.